Consider the following 606-residue polypeptide: MLKSFSLIGKNITKNVSLSSSNKFLFGKNHQNMKSIYSSIRFFSSEQELPPRDSDQFDVVIVGAGPSGLSTAIRLKQLSEKAGKDLRVCVVEKGSEVGSHILSGAVMDPKALNELIPDWKEKGAPLITEVKQDKFYFLTENRSLRLPTPRLMHNEGNYIISLGNVVRWLGEQAESMGVEVYPSFAASEVLYHDNGAVRGIATNDMGIAKDGSLTSNFTRGMELNARLTIFAEGCRGSLTKGLFEKFNLRDECEPQTFGLGIKETWEIKPEKHQQGLVIHTLGYPLSDELLGGSFIYHAENNTVNLGLVVGLDYSNPYLNPYQEFQKLKLHPMVKDMLEGGTCIQYGARTINEGGFQSIPKLVFPGGALVGCTAGFVHVPKVKGSHYAMKTGILAAEAAFPQLISQQEKEQEQEQDKPSVEPLLINEYPEELKKSWVWKELREVRNYRPSLHWGTIPGLIYGALEMYIFRGHTPWTLSNGKPDNERLKPAAECKKIEYKKPDGQITFDLMTSVMRSGTNHEENQPIHLKVRDMEVAKKVNRDIYDGPEGRFCPAGVYEWVEGEKGEKELVRNSVFCLHCKTCDIKDPTQNIDFTVPEGGGGPKYGAM.

59–73 (VVIVGAGPSGLSTAI) serves as a coordination point for FAD. Residues 448–468 (PSLHWGTIPGLIYGALEMYIF) traverse the membrane as a helical segment. The [4Fe-4S] cluster site is built by C551, C575, C578, and C581.

Belongs to the ETF-QO/FixC family. As to quaternary structure, monomer. It depends on [4Fe-4S] cluster as a cofactor. The cofactor is FAD.

It localises to the mitochondrion inner membrane. It catalyses the reaction a ubiquinone + reduced [electron-transfer flavoprotein] = a ubiquinol + oxidized [electron-transfer flavoprotein] + H(+). Its function is as follows. Accepts electrons from ETF and reduces ubiquinone. This Dictyostelium discoideum (Social amoeba) protein is Electron transfer flavoprotein-ubiquinone oxidoreductase, mitochondrial (etfdh).